We begin with the raw amino-acid sequence, 501 residues long: MAINAQEISALIKQQIENFKPNFDVTETGVVTYIGDGIARAHGLENVMSGELLNFENGSYGMAQNLESTDVGIIILGDFTDIREGDTIRRTGKIMEVPVGESLIGRVVDPLGRPVDGLGEIHTDKTRPVEAPAPGVMQRKSVSEPLQTGLKAIDALVPIGRGQRELIIGDRQTGKTTIAIDTILNQKDQDMICIYVAIGQKESTVRTQVETLRQYGALDYTIVVTASASQPSPLLFLAPYTGVAMAEEFMYQGKHVLIVYDDLSKQAVAYRELSLLLRRPPGREAFPGDVFYLHSRLLERSAKVSDELGGGSITALPFIETQAGDISAYIATNVISITDGQIFLGDGLFNAGIRPAIDAGSSVSRVGGSAQIKAMKKVAGTLRIDLASYRELEAFTKFGSDLDAATQAKLNRGRRTVEVLKQPVHKPLPVEKQVTILYALTHGFLDTVPVDDIVRFEEEFHAFFDAQHPEILETIRDTKDLPEEAVLDAAITEFLNQSSFQ.

Residue 169 to 176 (GDRQTGKT) coordinates ATP.

The protein belongs to the ATPase alpha/beta chains family. In terms of assembly, F-type ATPases have 2 components, CF(1) - the catalytic core - and CF(0) - the membrane proton channel. CF(1) has five subunits: alpha(3), beta(3), gamma(1), delta(1), epsilon(1). CF(0) has three main subunits: a(1), b(2) and c(9-12). The alpha and beta chains form an alternating ring which encloses part of the gamma chain. CF(1) is attached to CF(0) by a central stalk formed by the gamma and epsilon chains, while a peripheral stalk is formed by the delta and b chains.

Its subcellular location is the cell membrane. It catalyses the reaction ATP + H2O + 4 H(+)(in) = ADP + phosphate + 5 H(+)(out). Functionally, produces ATP from ADP in the presence of a proton gradient across the membrane. The alpha chain is a regulatory subunit. The protein is ATP synthase subunit alpha of Streptococcus pneumoniae (strain 70585).